The primary structure comprises 339 residues: DNA-directed RNA polymerase subunit alpha (339 aa).

The segment at 1–233 is alpha N-terminal domain (alpha-NTD); that stretch reads MVREEVAGST…DLFLPFLHAE (233 aa). The interval 264–339 is alpha C-terminal domain (alpha-CTD); that stretch reads KKGIPLNCIF…IDLLKNKLSF (76 aa).

The protein belongs to the RNA polymerase alpha chain family. In plastids the minimal PEP RNA polymerase catalytic core is composed of four subunits: alpha, beta, beta', and beta''. When a (nuclear-encoded) sigma factor is associated with the core the holoenzyme is formed, which can initiate transcription.

The protein localises to the plastid. The protein resides in the chloroplast. It catalyses the reaction RNA(n) + a ribonucleoside 5'-triphosphate = RNA(n+1) + diphosphate. In terms of biological role, DNA-dependent RNA polymerase catalyzes the transcription of DNA into RNA using the four ribonucleoside triphosphates as substrates. The sequence is that of DNA-directed RNA polymerase subunit alpha from Agropyron cristatum (Crested wheatgrass).